The chain runs to 115 residues: uncharacterized protein (115 aa).

Residues 1-91 (MTEYNANSIR…SELEGFKNVS (91 aa)) enclose the HTH arsR-type domain. The H-T-H motif DNA-binding region spans 30–53 (ASLISHTLLLSYATVLRHLRILND).

Its function is as follows. Essential for virus function. This is an uncharacterized protein from Saccharolobus solfataricus (Sulfolobus solfataricus).